We begin with the raw amino-acid sequence, 360 residues long: Peptide chain release factor 1 (360 aa).

Glutamine 235 is subject to N5-methylglutamine. The disordered stretch occupies residues 284-313; sequence AKRQQAEASTRRNLLGSGDRSDRNRTYNFP.

It belongs to the prokaryotic/mitochondrial release factor family. Post-translationally, methylated by PrmC. Methylation increases the termination efficiency of RF1.

Its subcellular location is the cytoplasm. Functionally, peptide chain release factor 1 directs the termination of translation in response to the peptide chain termination codons UAG and UAA. The protein is Peptide chain release factor 1 of Escherichia coli (strain UTI89 / UPEC).